The following is a 29-amino-acid chain: Orphan peptide CllNtx (29 aa).

In terms of processing, contains 3 disulfide bonds. In terms of tissue distribution, expressed by the venom gland.

The protein localises to the secreted. Functionally, may act as a toxin. The sequence is that of Orphan peptide CllNtx from Centruroides limpidus (Mexican scorpion).